A 122-amino-acid polypeptide reads, in one-letter code: Large ribosomal subunit protein uL14 (122 aa).

Belongs to the universal ribosomal protein uL14 family. Part of the 50S ribosomal subunit. Forms a cluster with proteins L3 and L19. In the 70S ribosome, L14 and L19 interact and together make contacts with the 16S rRNA in bridges B5 and B8.

Functionally, binds to 23S rRNA. Forms part of two intersubunit bridges in the 70S ribosome. This chain is Large ribosomal subunit protein uL14, found in Pelagibacter ubique (strain HTCC1062).